The primary structure comprises 96 residues: Putative pterin-4-alpha-carbinolamine dehydratase (96 aa).

It belongs to the pterin-4-alpha-carbinolamine dehydratase family.

The enzyme catalyses (4aS,6R)-4a-hydroxy-L-erythro-5,6,7,8-tetrahydrobiopterin = (6R)-L-erythro-6,7-dihydrobiopterin + H2O. This is Putative pterin-4-alpha-carbinolamine dehydratase from Caulobacter sp. (strain K31).